The sequence spans 383 residues: Alkanesulfonate monooxygenase (383 aa).

The protein belongs to the SsuD family. Homotetramer.

It catalyses the reaction an alkanesulfonate + FMNH2 + O2 = an aldehyde + FMN + sulfite + H2O + 2 H(+). Catalyzes the desulfonation of aliphatic sulfonates. The protein is Alkanesulfonate monooxygenase of Erwinia pyrifoliae (strain DSM 12163 / CIP 106111 / Ep16/96).